A 123-amino-acid polypeptide reads, in one-letter code: ATP synthase epsilon chain (123 aa).

Belongs to the ATPase epsilon chain family. As to quaternary structure, F-type ATPases have 2 components, CF(1) - the catalytic core - and CF(0) - the membrane proton channel. CF(1) has five subunits: alpha(3), beta(3), gamma(1), delta(1), epsilon(1). CF(0) has three main subunits: a, b and c.

It is found in the cell inner membrane. Functionally, produces ATP from ADP in the presence of a proton gradient across the membrane. The protein is ATP synthase epsilon chain of Helicobacter pylori (strain P12).